The chain runs to 210 residues: MLAGLSPHLSNLRRSLTQVLNFALVLSTAFMMWKGLSIYTNSSSPIVVVLSGSMEPAFQRGDLLFLWNRSPRAEVGEIVVYNVRGKDIPIVHRVVRAFGDDEKSPKETNGQKKKKVMSSGKKDSIAAGALHSDSALVSHRILTKGDNNIADDTELYAQGQDYLDRKLDLVGSVRGYIPAVGYVTIMLSEHPWLKTVLLGIMGAMVILQRE.

The Cytoplasmic segment spans residues 1–21 (MLAGLSPHLSNLRRSLTQVLN). Residues 22–38 (FALVLSTAFMMWKGLSI) traverse the membrane as a helical; Signal-anchor for type II membrane protein segment. The Lumenal portion of the chain corresponds to 39 to 210 (YTNSSSPIVV…MGAMVILQRE (172 aa)). N41 carries an N-linked (GlcNAc...) asparagine glycan. Catalysis depends on charge relay system residues S53, H92, and D152. The interval 196–207 (VLLGIMGAMVIL) is C-terminal short (CTS) helix.

Belongs to the peptidase S26B family. As to quaternary structure, component of the signal peptidase complex (SPC) composed of a catalytic subunit SEC11 and three accessory subunits SPC1, SPC2 and SPC3. The complex induces a local thinning of the ER membrane which is used to measure the length of the signal peptide (SP) h-region of protein substrates. This ensures the selectivity of the complex towards h-regions shorter than 18-20 amino acids. SPC associates with the translocon complex.

The protein localises to the endoplasmic reticulum membrane. The enzyme catalyses Cleavage of hydrophobic, N-terminal signal or leader sequences from secreted and periplasmic proteins.. Catalytic component of the signal peptidase complex (SPC) which catalyzes the cleavage of N-terminal signal sequences from nascent proteins as they are translocated into the lumen of the endoplasmic reticulum. Specifically cleaves N-terminal signal peptides that contain a hydrophobic alpha-helix (h-region) shorter than 18-20 amino acids. The protein is Signal peptidase complex catalytic subunit SEC11 (SEC11) of Coccidioides posadasii (strain RMSCC 757 / Silveira) (Valley fever fungus).